The sequence spans 122 residues: Fluoride-specific ion channel FluC (122 aa).

The next 4 membrane-spanning stretches (helical) occupy residues 6–26 (LVVG…INLV), 33–53 (SISL…GLLF), 60–80 (GLSP…FTTF), and 101–121 (LNII…FIIF). Na(+) is bound by residues Gly75 and Thr78.

It belongs to the fluoride channel Fluc/FEX (TC 1.A.43) family.

It is found in the cell inner membrane. It carries out the reaction fluoride(in) = fluoride(out). Its activity is regulated as follows. Na(+) is not transported, but it plays an essential structural role and its presence is essential for fluoride channel function. Its function is as follows. Fluoride-specific ion channel. Important for reducing fluoride concentration in the cell, thus reducing its toxicity. In Campylobacter jejuni subsp. jejuni serotype O:6 (strain 81116 / NCTC 11828), this protein is Fluoride-specific ion channel FluC.